Consider the following 259-residue polypeptide: Pimeloyl-[acyl-carrier protein] methyl ester esterase (259 aa).

Positions 16-244 (LVFIHGWGLN…ASHAPFLSHP (229 aa)) constitute an AB hydrolase-1 domain. Residues Trp22, 82 to 83 (SL), and 143 to 147 (FFNIQ) contribute to the substrate site. The active-site Nucleophile is the Ser82. Catalysis depends on residues Asp207 and His237. His237 serves as a coordination point for substrate.

The protein belongs to the AB hydrolase superfamily. Carboxylesterase BioH family. In terms of assembly, monomer.

It is found in the cytoplasm. It carries out the reaction 6-carboxyhexanoyl-[ACP] methyl ester + H2O = 6-carboxyhexanoyl-[ACP] + methanol + H(+). It participates in cofactor biosynthesis; biotin biosynthesis. The physiological role of BioH is to remove the methyl group introduced by BioC when the pimeloyl moiety is complete. It allows to synthesize pimeloyl-ACP via the fatty acid synthetic pathway through the hydrolysis of the ester bonds of pimeloyl-ACP esters. The sequence is that of Pimeloyl-[acyl-carrier protein] methyl ester esterase from Wigglesworthia glossinidia brevipalpis.